Reading from the N-terminus, the 345-residue chain is Protein RecA (345 aa).

66 to 73 (GPESSGKT) lines the ATP pocket.

Belongs to the RecA family.

The protein resides in the cytoplasm. Its function is as follows. Can catalyze the hydrolysis of ATP in the presence of single-stranded DNA, the ATP-dependent uptake of single-stranded DNA by duplex DNA, and the ATP-dependent hybridization of homologous single-stranded DNAs. It interacts with LexA causing its activation and leading to its autocatalytic cleavage. This is Protein RecA from Frankia casuarinae (strain DSM 45818 / CECT 9043 / HFP020203 / CcI3).